We begin with the raw amino-acid sequence, 156 residues long: Transcription antitermination protein NusB (156 aa).

Belongs to the NusB family.

Functionally, involved in transcription antitermination. Required for transcription of ribosomal RNA (rRNA) genes. Binds specifically to the boxA antiterminator sequence of the ribosomal RNA (rrn) operons. This Mycobacterium tuberculosis (strain CDC 1551 / Oshkosh) protein is Transcription antitermination protein NusB.